The following is a 44-amino-acid chain: uncharacterized protein (44 aa).

A helical transmembrane segment spans residues 4-24; sequence ISSILIRGGGVLIVVILLLWI.

The protein resides in the membrane. This is an uncharacterized protein from Ornithodoros (relapsing fever ticks).